A 235-amino-acid polypeptide reads, in one-letter code: Ion-translocating oxidoreductase complex subunit E (235 aa).

A run of 5 helical transmembrane segments spans residues 63–83, 93–113, 117–137, 152–172, and 206–226; these read LGLGLATMLVLTCTNTVISLF, IPIYVMIIATTVTAVQLLMNA, TLYQSLGIFIPLIVTNCIIIG, IWDGFSMGLGMALSLTILGAL, and SFLLFILPPGAFIGLGLLLAI.

Belongs to the NqrDE/RnfAE family. In terms of assembly, the complex is composed of six subunits: RnfA, RnfB, RnfC, RnfD, RnfE and RnfG.

Its subcellular location is the cell inner membrane. In terms of biological role, part of a membrane-bound complex that couples electron transfer with translocation of ions across the membrane. The sequence is that of Ion-translocating oxidoreductase complex subunit E from Haemophilus influenzae (strain 86-028NP).